The primary structure comprises 569 residues: 2-succinyl-5-enolpyruvyl-6-hydroxy-3-cyclohexene-1-carboxylate synthase (569 aa).

It belongs to the TPP enzyme family. MenD subfamily. As to quaternary structure, homodimer. Mg(2+) serves as cofactor. It depends on Mn(2+) as a cofactor. The cofactor is thiamine diphosphate.

It carries out the reaction isochorismate + 2-oxoglutarate + H(+) = 5-enolpyruvoyl-6-hydroxy-2-succinyl-cyclohex-3-ene-1-carboxylate + CO2. The protein operates within quinol/quinone metabolism; 1,4-dihydroxy-2-naphthoate biosynthesis; 1,4-dihydroxy-2-naphthoate from chorismate: step 2/7. It participates in quinol/quinone metabolism; menaquinone biosynthesis. Functionally, catalyzes the thiamine diphosphate-dependent decarboxylation of 2-oxoglutarate and the subsequent addition of the resulting succinic semialdehyde-thiamine pyrophosphate anion to isochorismate to yield 2-succinyl-5-enolpyruvyl-6-hydroxy-3-cyclohexene-1-carboxylate (SEPHCHC). The sequence is that of 2-succinyl-5-enolpyruvyl-6-hydroxy-3-cyclohexene-1-carboxylate synthase from Shewanella sediminis (strain HAW-EB3).